A 276-amino-acid polypeptide reads, in one-letter code: 4-chlorobenzoyl coenzyme A dehalogenase-1 (276 aa).

Substrate is bound at residue 66–71 (AGFDLE). H93 (proton acceptor) is an active-site residue. G117 is a binding site for substrate. D148 acts as the Nucleophile in catalysis. A substrate-binding site is contributed by R261.

This sequence belongs to the enoyl-CoA hydratase/isomerase family. Homotetramer.

The catalysed reaction is 4-chlorobenzoyl-CoA + H2O = 4-hydroxybenzoyl-CoA + chloride + H(+). The protein operates within xenobiotic degradation; 4-chlorobenzoate degradation; 4-hydroxybenzoate from 4-chlorobenzoate: step 2/3. In terms of biological role, dehalogenates 4-chlorobenzoyl-CoA, 4-iodobenzoyl-CoA, 4-bromobenzoyl-CoA and, at a slower rate, 4-fluorobenzoyl-CoA. Does not dehalogenate 2-chlorobenzoyl-CoA or 3-chlorobenzoyl-CoA. This Arthrobacter sp protein is 4-chlorobenzoyl coenzyme A dehalogenase-1.